The primary structure comprises 540 residues: Calnexin homolog (540 aa).

The first 29 residues, 1 to 29 (MELSRRKMCCYIQFCCFVLIGCFISQICA), serve as a signal peptide directing secretion. The Lumenal portion of the chain corresponds to 30–469 (SSDAIFYESF…EKAETQPNIT (440 aa)). Ca(2+) contacts are provided by serine 38 and aspartate 69. A disulfide bridge links cysteine 112 with cysteine 147. 4 residues coordinate an alpha-D-glucoside: tyrosine 116, lysine 118, tyrosine 138, and aspartate 145. The segment at 221-301 (LIPTKTIPDP…DWDDEEDGEW (81 aa)) is disordered. The segment at 227 to 360 (IPDPDDKKPE…REIPNPDYFE (134 aa)) is p domain (Extended arm). Positions 228 to 253 (PDPDDKKPEDWDERAKIPDPEATKPD) are enriched in basic and acidic residues. Repeat copies occupy residues 229 to 240 (DPDDKKPEDWDE), 246 to 257 (DPEATKPDDWDE), 265 to 276 (DEEAEKPEGWLD), 284 to 295 (DPEAVKPEDWDD), and 299 to 309 (GEWEAPQIENP). 4 X approximate repeats regions lie at residues 229–295 (DPDD…DWDD) and 299–356 (GEWE…IPNP). 2 stretches are compositionally biased toward acidic residues: residues 254–285 (DWDE…IDDP) and 292–301 (DWDDEEDGEW). Cysteine 311 and cysteine 317 form a disulfide bridge. Tandem repeats lie at residues 318-328 (GEWRRPLKRNP), 332-342 (GKWHAPLIDNP), and 346-356 (GIWKPREIPNP). Glutamate 375 lines the an alpha-D-glucoside pocket. Position 386 (aspartate 386) interacts with Ca(2+). The N-linked (GlcNAc...) asparagine glycan is linked to asparagine 467. The chain crosses the membrane as a helical span at residues 470 to 490 (IGVIVSIIVVIFSILLKLLFG). Over 491-540 (GKKAAPKVNVVPKKKEEPEASNTAEVREGEEEKTEGEVAAAPRRRPRRDT) the chain is Cytoplasmic. A disordered region spans residues 499–540 (NVVPKKKEEPEASNTAEVREGEEEKTEGEVAAAPRRRPRRDT).

The protein belongs to the calreticulin family.

It localises to the endoplasmic reticulum membrane. Calcium-binding protein that interacts with newly synthesized monoglucosylated glycoproteins in the endoplasmic reticulum. It may act in assisting protein assembly and/or in the retention within the ER of unassembled protein subunits. It seems to play a major role in the quality control apparatus of the ER by the retention of incorrectly folded proteins. In Helianthus tuberosus (Jerusalem artichoke), this protein is Calnexin homolog.